We begin with the raw amino-acid sequence, 476 residues long: Angiotensinogen (476 aa).

The signal sequence occupies residues 1-24 (MAPAGLSLGATILCLLAWAGLAAG). Residues Cys-42 and Cys-161 are joined by a disulfide bond. Residues 45–64 (LEKPSVETPADPTLTPVPIQ) are disordered. Asn-295 carries an N-linked (GlcNAc...) asparagine glycan.

This sequence belongs to the serpin family. In response to low blood pressure, the enzyme renin/REN cleaves angiotensinogen to produce angiotensin-1. Angiotensin-1 is a substrate of ACE (angiotensin converting enzyme) that removes a dipeptide to yield the physiologically active peptide angiotensin-2. Angiotensin-1 and angiotensin-2 can be further processed to generate angiotensin-3, angiotensin-4. Angiotensin 1-9 is cleaved from angiotensin-1 by ACE2 and can be further processed by ACE to produce angiotensin 1-7, angiotensin 1-5 and angiotensin 1-4. Angiotensin 1-7 has also been proposed to be cleaved from angiotensin-2 by ACE2 or from angiotensin-1 by MME (neprilysin). In terms of processing, the disulfide bond is labile. Angiotensinogen is present in the circulation in a near 40:60 ratio with the oxidized disulfide-bonded form, which preferentially interacts with receptor-bound renin.

It localises to the secreted. Functionally, essential component of the renin-angiotensin system (RAS), a potent regulator of blood pressure, body fluid and electrolyte homeostasis. In terms of biological role, acts directly on vascular smooth muscle as a potent vasoconstrictor, affects cardiac contractility and heart rate through its action on the sympathetic nervous system, and alters renal sodium and water absorption through its ability to stimulate the zona glomerulosa cells of the adrenal cortex to synthesize and secrete aldosterone. Acts by binding to angiotensin receptors AGTR1 and AGTR2. Also binds the DEAR/FBXW7-AS1 receptor. Stimulates aldosterone release. Its function is as follows. Is a ligand for the G-protein coupled receptor MAS1. Has vasodilator and antidiuretic effects. Has an antithrombotic effect that involves MAS1-mediated release of nitric oxide from platelets. This chain is Angiotensinogen (AGT), found in Ovis aries (Sheep).